The primary structure comprises 753 residues: MRVLITNDDGPLSDQFSPYIRPFIQHIKRNYPEWKITVCVPHVQKSWVGKAHLAGKNLTAQFIYSKVDAEDNTFWGPFIQPQIRSENSKLPYVLNAEIPKDTIEWILIDGTPASCANIGLHLLSNEPFDLVLSGPNVGRNTSAAYITSSGTVGGAMESVITGNTKAIAISWAYFNGLKNVSPLLMEKASKRSLDVIKHLVKNWDPKTDLYSINIPLVESLSDDTKVYYAPIWENRWIPIFNGPHINLENSFAEIEDGNESSSISFNWAPKFGAHKDSIHYMDEYKDRTVLTDAEVIESEMISVTPMKATFKGVNHLLGELKLTEEENNLSKTNNLIVVSIDPMEYIYKPLTHALKKYLPQVEIVSNLPEFDNGGCEKEMKVFHYGDYEQLDMDKLMELPNNYFTNSYIYRKALIRKHFLSHTIQTYTAKNPESILKKAYLESFTIDLDYAEFLDDALDENWELRQELENESQDKWWIVKPSMSDKGQGIRVFKTIEDLQAIFDSFDDEDSEAEESGNDDDADDVNGEFMDNNKVNISQLRHFIIQEYLTNPLLLASMDNRKFHIRCYVVCRGDLQVFVYDRMLALFAAKPFVPLDPYAYSVTDLKDLECHLTNTCLQSKKKDKDSSVLEFDSIEEIPNERKSNIKEQIHSITNDVFLAAVNVNRLNFQPLPNAFETYGVDFLIDSNYEVKLLEINAFPDFKQTGKDLKNLIDELFDDTVKYCVTPIFNENRNKTDDETDPNFVKVIDYTSNGW.

One can recognise a TTL domain in the interval 343 to 734 (MEYIYKPLTH…PIFNENRNKT (392 aa)).

It belongs to the tubulin--tyrosine ligase family. The cofactor is Mg(2+). K(+) is required as a cofactor.

The protein localises to the cytoplasm. It localises to the P-body. The enzyme catalyses C-terminal L-alpha-aminoacyl-L-glutamyl-L-glutamyl-[tubulin] + L-tyrosine + ATP = C-terminal L-alpha-aminoacyl-L-glutamyl-L-glutamyl-L-tyrosyl-[tubulin] + ADP + phosphate + H(+). Functionally, probable P-body-associated tubulin--tyrosine ligase. The polypeptide is Probable tubulin--tyrosine ligase PBY1 (PBY1) (Saccharomyces cerevisiae (strain ATCC 204508 / S288c) (Baker's yeast)).